Here is a 103-residue protein sequence, read N- to C-terminus: ESAT-6-like protein EsxF (103 aa).

It belongs to the WXG100 family. CFP-10 subfamily.

Its subcellular location is the secreted. This chain is ESAT-6-like protein EsxF, found in Mycobacterium tuberculosis (strain CDC 1551 / Oshkosh).